The primary structure comprises 376 residues: uncharacterized protein (376 aa).

The protein belongs to the choline/ethanolamine kinase family.

This is an uncharacterized protein from Caenorhabditis elegans.